A 491-amino-acid chain; its full sequence is Glutamyl-tRNA(Gln) amidotransferase subunit A (491 aa).

Catalysis depends on charge relay system residues Lys-79 and Ser-154. Residue Ser-178 is the Acyl-ester intermediate of the active site.

The protein belongs to the amidase family. GatA subfamily. As to quaternary structure, heterotrimer of A, B and C subunits.

The enzyme catalyses L-glutamyl-tRNA(Gln) + L-glutamine + ATP + H2O = L-glutaminyl-tRNA(Gln) + L-glutamate + ADP + phosphate + H(+). Functionally, allows the formation of correctly charged Gln-tRNA(Gln) through the transamidation of misacylated Glu-tRNA(Gln) in organisms which lack glutaminyl-tRNA synthetase. The reaction takes place in the presence of glutamine and ATP through an activated gamma-phospho-Glu-tRNA(Gln). The chain is Glutamyl-tRNA(Gln) amidotransferase subunit A from Synechococcus sp. (strain CC9605).